The sequence spans 735 residues: Catalase-peroxidase (735 aa).

The segment covering 1–10 (MMDGAQTNSG) has biased composition (polar residues). Residues 1–20 (MMDGAQTNSGGCPVMHGGGS) form a disordered region. A cross-link (tryptophyl-tyrosyl-methioninium (Trp-Tyr) (with M-254)) is located at residues 100 to 228 (WHSAGTYRTY…LAAVQMGLIY (129 aa)). Histidine 101 serves as the catalytic Proton acceptor. Positions 228–254 (YVNPQGPDGNPDPLASAFDIRDTFARM) form a cross-link, tryptophyl-tyrosyl-methioninium (Tyr-Met) (with W-100). Histidine 269 provides a ligand contact to heme b.

This sequence belongs to the peroxidase family. Peroxidase/catalase subfamily. Homodimer or homotetramer. Heme b is required as a cofactor. Post-translationally, formation of the three residue Trp-Tyr-Met cross-link is important for the catalase, but not the peroxidase activity of the enzyme.

The enzyme catalyses H2O2 + AH2 = A + 2 H2O. It catalyses the reaction 2 H2O2 = O2 + 2 H2O. In terms of biological role, bifunctional enzyme with both catalase and broad-spectrum peroxidase activity. The sequence is that of Catalase-peroxidase from Jannaschia sp. (strain CCS1).